The sequence spans 246 residues: ATP synthase subunit a (246 aa).

The propeptide at 1–3 is removed in mature form; it reads MFY. The next 7 membrane-spanning stretches (helical) occupy residues 21–41, 56–76, 82–102, 113–133, 138–158, 184–204, and 206–226; these read LTFSITNYTLYLIIVSLIIIF, WGVSVIAIYDTILNLVNGQIG, YFPLIFTIFNFILIANLISMI, VAVVSFSLTLWIGNVVLGLYL, FFALFVPSGTPLALVPVLVLI, LMLILGSLIISLMSSSFLGFV, and GIIPILAVVAITILEFGIAII.

The protein belongs to the ATPase A chain family. As to quaternary structure, F-type ATPases have 2 components, CF(1) - the catalytic core - and CF(0) - the membrane proton channel. CF(1) has five subunits: alpha(3), beta(3), gamma(1), delta(1), epsilon(1). CF(0) has three main subunits: a, b and c.

It localises to the mitochondrion inner membrane. In terms of biological role, mitochondrial membrane ATP synthase (F(1)F(0) ATP synthase or Complex V) produces ATP from ADP in the presence of a proton gradient across the membrane which is generated by electron transport complexes of the respiratory chain. F-type ATPases consist of two structural domains, F(1) - containing the extramembraneous catalytic core and F(0) - containing the membrane proton channel, linked together by a central stalk and a peripheral stalk. During catalysis, ATP synthesis in the catalytic domain of F(1) is coupled via a rotary mechanism of the central stalk subunits to proton translocation. Key component of the proton channel; it may play a direct role in the translocation of protons across the membrane. This is ATP synthase subunit a (ATP6) from Candida parapsilosis (Yeast).